The primary structure comprises 332 residues: Ketol-acid reductoisomerase (NADP(+)) (332 aa).

Residues 2–182 (AKIYTDKDVS…GATRAGVIET (181 aa)) enclose the KARI N-terminal Rossmann domain. NADP(+)-binding positions include 25 to 28 (YGSQ), Ser-53, and 83 to 86 (DMIQ). His-108 is an active-site residue. Residue Gly-134 coordinates NADP(+). Positions 183 to 328 (TFKEETETDL…RSLRDIILRG (146 aa)) constitute a KARI C-terminal knotted domain. Residues Asp-191, Glu-195, Glu-227, and Glu-231 each contribute to the Mg(2+) site. A substrate-binding site is contributed by Ser-252.

The protein belongs to the ketol-acid reductoisomerase family. It depends on Mg(2+) as a cofactor.

The enzyme catalyses (2R)-2,3-dihydroxy-3-methylbutanoate + NADP(+) = (2S)-2-acetolactate + NADPH + H(+). It catalyses the reaction (2R,3R)-2,3-dihydroxy-3-methylpentanoate + NADP(+) = (S)-2-ethyl-2-hydroxy-3-oxobutanoate + NADPH + H(+). It participates in amino-acid biosynthesis; L-isoleucine biosynthesis; L-isoleucine from 2-oxobutanoate: step 2/4. The protein operates within amino-acid biosynthesis; L-valine biosynthesis; L-valine from pyruvate: step 2/4. Involved in the biosynthesis of branched-chain amino acids (BCAA). Catalyzes an alkyl-migration followed by a ketol-acid reduction of (S)-2-acetolactate (S2AL) to yield (R)-2,3-dihydroxy-isovalerate. In the isomerase reaction, S2AL is rearranged via a Mg-dependent methyl migration to produce 3-hydroxy-3-methyl-2-ketobutyrate (HMKB). In the reductase reaction, this 2-ketoacid undergoes a metal-dependent reduction by NADPH to yield (R)-2,3-dihydroxy-isovalerate. The protein is Ketol-acid reductoisomerase (NADP(+)) of Sulfolobus acidocaldarius (strain ATCC 33909 / DSM 639 / JCM 8929 / NBRC 15157 / NCIMB 11770).